The following is a 224-amino-acid chain: Uracil-DNA glycosylase (224 aa).

The active-site Proton acceptor is D65.

This sequence belongs to the uracil-DNA glycosylase (UDG) superfamily. UNG family.

The protein localises to the cytoplasm. It catalyses the reaction Hydrolyzes single-stranded DNA or mismatched double-stranded DNA and polynucleotides, releasing free uracil.. Functionally, excises uracil residues from the DNA which can arise as a result of misincorporation of dUMP residues by DNA polymerase or due to deamination of cytosine. This Buchnera aphidicola subsp. Baizongia pistaciae (strain Bp) protein is Uracil-DNA glycosylase.